The sequence spans 49 residues: Large ribosomal subunit protein bL33 (49 aa).

Belongs to the bacterial ribosomal protein bL33 family.

The protein is Large ribosomal subunit protein bL33 of Desulfitobacterium hafniense (strain Y51).